The primary structure comprises 409 residues: DNA replication and repair protein RecF (409 aa).

30-37 (GSNGHGKT) provides a ligand contact to ATP.

The protein belongs to the RecF family.

The protein resides in the cytoplasm. Functionally, the RecF protein is involved in DNA metabolism; it is required for DNA replication and normal SOS inducibility. RecF binds preferentially to single-stranded, linear DNA. It also seems to bind ATP. The polypeptide is DNA replication and repair protein RecF (Rhodococcus erythropolis (strain PR4 / NBRC 100887)).